The primary structure comprises 108 residues: Nucleoid-associated protein BAV0915 (108 aa).

The protein belongs to the YbaB/EbfC family. In terms of assembly, homodimer.

The protein resides in the cytoplasm. The protein localises to the nucleoid. Functionally, binds to DNA and alters its conformation. May be involved in regulation of gene expression, nucleoid organization and DNA protection. The sequence is that of Nucleoid-associated protein BAV0915 from Bordetella avium (strain 197N).